Reading from the N-terminus, the 334-residue chain is MVGREKELSIHFVPGSCRLVEEEVNIPNRRVLVTGATGLLGRAVHKEFQQNNWHAVGCGFRRARPKFEQVNLLDSNAVHHIIHDFQPHVIVHCAAERRPDVVENQPDAASQLNVDASGNLAKEAAAVGAFLIYISSDYVFDGTNPPYREEDIPAPLNLYGKTKLDGEKAVLENNLGAAVLRIPILYGEVEKLEESAVTVMFDKVQFSNKSANMDHWQQRFPTHVKDVATVCRQLAEKRMLDPSIKGTFHWSGNEQMTKYEMACAIADAFNLPSSHLRPITDSPVLGAQRPRNAQLDCSKLETLGIGQRTPFRIGIKESLWPFLIDKRWRQTVFH.

NADP(+) contacts are provided by residues 37–40 (TGLL), 60–62 (FRR), 71–72 (NL), cysteine 93, arginine 97, tyrosine 159, and leucine 185. Threonine 309 carries the phosphothreonine modification. The segment at 319–334 (LWPFLIDKRWRQTVFH) is required for interaction with MAT2A.

The protein belongs to the dTDP-4-dehydrorhamnose reductase family. MAT2B subfamily. As to quaternary structure, heterotrimer; composed of a catalytic MAT2A homodimer that binds one regulatory MAT2B chain. Heterohexamer; composed of a central, catalytic MAT2A homotetramer flanked on either side by a regulatory MAT2B chain. NADP binding increases the affinity for MAT2A.

It functions in the pathway amino-acid biosynthesis; S-adenosyl-L-methionine biosynthesis; S-adenosyl-L-methionine from L-methionine: step 1/1. Its function is as follows. Regulatory subunit of S-adenosylmethionine synthetase 2, an enzyme that catalyzes the formation of S-adenosylmethionine from methionine and ATP. Regulates MAT2A catalytic activity by changing its kinetic properties, increasing its affinity for L-methionine. Can bind NADP (in vitro). In Pongo abelii (Sumatran orangutan), this protein is Methionine adenosyltransferase 2 subunit beta (MAT2B).